Consider the following 859-residue polypeptide: DNA-directed RNA polymerase subunit Rpo1C (859 aa).

It belongs to the RNA polymerase beta' chain family. In terms of assembly, part of the RNA polymerase complex. In terms of processing, this protein undergoes a protein self splicing that involves a post-translational excision of the intervening region (intein) followed by peptide ligation.

It is found in the cytoplasm. It carries out the reaction RNA(n) + a ribonucleoside 5'-triphosphate = RNA(n+1) + diphosphate. Its function is as follows. DNA-dependent RNA polymerase (RNAP) catalyzes the transcription of DNA into RNA using the four ribonucleoside triphosphates as substrates. Forms part of the jaw domain. This is DNA-directed RNA polymerase subunit Rpo1C from Methanocaldococcus jannaschii (strain ATCC 43067 / DSM 2661 / JAL-1 / JCM 10045 / NBRC 100440) (Methanococcus jannaschii).